The primary structure comprises 183 residues: TATA-box-binding protein (183 aa).

A run of 2 repeats spans residues 8 to 84 and 99 to 175.

It belongs to the TBP family.

General factor that plays a role in the activation of archaeal genes transcribed by RNA polymerase. Binds specifically to the TATA box promoter element which lies close to the position of transcription initiation. In Methanosphaera stadtmanae (strain ATCC 43021 / DSM 3091 / JCM 11832 / MCB-3), this protein is TATA-box-binding protein.